The sequence spans 107 residues: ATP-dependent Clp protease adapter protein ClpS (107 aa).

A compositionally biased stretch (basic and acidic residues) spans 1–12 (MSGDKDFDKDSD). The segment at 1 to 21 (MSGDKDFDKDSDVTVITRTTP) is disordered.

The protein belongs to the ClpS family. In terms of assembly, binds to the N-terminal domain of the chaperone ClpA.

Its function is as follows. Involved in the modulation of the specificity of the ClpAP-mediated ATP-dependent protein degradation. In Zymomonas mobilis subsp. mobilis (strain ATCC 31821 / ZM4 / CP4), this protein is ATP-dependent Clp protease adapter protein ClpS.